The primary structure comprises 2325 residues: Serine/threonine-protein kinase MEC1 (2325 aa).

The FAT domain occupies 1363 to 1886 (LLTTRSAECD…VWYIFSHARS (524 aa)). In terms of domain architecture, PI3K/PI4K catalytic spans 1993-2309 (FDDNVNIFFS…QVDVLIQEAT (317 aa)). Residues 1999–2005 (IFFSLQM) are G-loop. Positions 2174 to 2182 (GLGDRHCEN) are catalytic loop. The activation loop stretch occupies residues 2194-2218 (HIDFDCLFEKGTTLPTPEIVPFRLT). Residues 2293 to 2325 (LPMNIHGQVDVLIQEATSLERLSQMYAGWAAYM) enclose the FATC domain.

This sequence belongs to the PI3/PI4-kinase family. ATM subfamily.

Its subcellular location is the nucleus. It carries out the reaction L-seryl-[protein] + ATP = O-phospho-L-seryl-[protein] + ADP + H(+). The enzyme catalyses L-threonyl-[protein] + ATP = O-phospho-L-threonyl-[protein] + ADP + H(+). Functionally, serine/threonine protein kinase which activates checkpoint signaling upon genotoxic stresses such as ionizing radiation (IR), ultraviolet light (UV), or DNA replication stalling, thereby acting as a DNA damage sensor. Recognizes the substrate consensus sequence [ST]-Q. Recruited to DNA lesions in order to initiate the DNA repair by homologous recombination. Phosphorylates histone H2A to form H2AS128ph (gamma-H2A) at sites of DNA damage, also involved in the regulation of DNA damage response mechanism. Required for cell growth and meiotic recombination. The polypeptide is Serine/threonine-protein kinase MEC1 (MEC1) (Candida albicans (strain SC5314 / ATCC MYA-2876) (Yeast)).